Here is a 152-residue protein sequence, read N- to C-terminus: Ubiquitin-conjugating enzyme E2 2 (152 aa).

Residues 4 to 150 enclose the UBC core domain; that stretch reads PARKRLMRDF…VREVVEQSWT (147 aa). Residue Cys88 is the Glycyl thioester intermediate of the active site.

This sequence belongs to the ubiquitin-conjugating enzyme family.

It carries out the reaction S-ubiquitinyl-[E1 ubiquitin-activating enzyme]-L-cysteine + [E2 ubiquitin-conjugating enzyme]-L-cysteine = [E1 ubiquitin-activating enzyme]-L-cysteine + S-ubiquitinyl-[E2 ubiquitin-conjugating enzyme]-L-cysteine.. It participates in protein modification; protein ubiquitination. Catalyzes the covalent attachment of ubiquitin to other proteins. The sequence is that of Ubiquitin-conjugating enzyme E2 2 (UBC2) from Triticum aestivum (Wheat).